Here is a 33-residue protein sequence, read N- to C-terminus: Photosystem II reaction center protein Psb30 (33 aa).

The helical transmembrane segment at 5–25 (LIGQLVTVALVVGAGPIIIGA) threads the bilayer.

The protein belongs to the Psb30/Ycf12 family. As to quaternary structure, PSII is composed of 1 copy each of membrane proteins PsbA, PsbB, PsbC, PsbD, PsbE, PsbF, PsbH, PsbI, PsbJ, PsbK, PsbL, PsbM, PsbT, PsbX, PsbY, PsbZ, Psb30/Ycf12, peripheral proteins of the oxygen-evolving complex and a large number of cofactors. It forms dimeric complexes.

The protein resides in the plastid. The protein localises to the chloroplast thylakoid membrane. Its function is as follows. A core subunit of photosystem II (PSII), probably helps stabilize the reaction center. This chain is Photosystem II reaction center protein Psb30, found in Ostreococcus tauri.